The primary structure comprises 479 residues: Galactosylgalactosylxylosylprotein 3-beta-glucuronosyltransferase P (479 aa).

The Cytoplasmic segment spans residues 1 to 34; sequence MKGGNYTSLGTCSGINVSGNVAGTRKMSLGKSIK. A helical; Signal-anchor for type II membrane protein membrane pass occupies residues 35-50; sequence MYLTIFILTTCIYMAL. The Lumenal portion of the chain corresponds to 51-479; the sequence is YQYHISREPF…EHIDRLLVRP (429 aa). Residues Asn90, Asn97, Asn98, and Asn271 are each glycosylated (N-linked (GlcNAc...) asparagine). The segment covering 94 to 120 has biased composition (low complexity); it reads NTNNNSTTTSTTTTTAPTTPTTTTTTT. Residues 94-122 are disordered; sequence NTNNNSTTTSTTTTTAPTTPTTTTTTTVG. Mn(2+) is bound at residue Asp335. The active-site Proton acceptor is Glu418. An N-linked (GlcNAc...) asparagine glycan is attached at Asn460.

The protein belongs to the glycosyltransferase 43 family. It depends on Mn(2+) as a cofactor.

It is found in the golgi apparatus membrane. The enzyme catalyses 3-O-(beta-D-galactosyl-(1-&gt;3)-beta-D-galactosyl-(1-&gt;4)-beta-D-xylosyl)-L-seryl-[protein] + UDP-alpha-D-glucuronate = 3-O-(beta-D-GlcA-(1-&gt;3)-beta-D-Gal-(1-&gt;3)-beta-D-Gal-(1-&gt;4)-beta-D-Xyl)-L-seryl-[protein] + UDP + H(+). The protein operates within protein modification; protein glycosylation. Involved in the biosynthesis of L2/HNK-1 carbohydrate epitope on both glycolipids and glycoproteins. Enzyme has a broad specificity. The chain is Galactosylgalactosylxylosylprotein 3-beta-glucuronosyltransferase P (GlcAT-P) from Drosophila melanogaster (Fruit fly).